We begin with the raw amino-acid sequence, 232 residues long: Ornithine carbamoyltransferase (232 aa).

Carbamoyl phosphate is bound by residues glutamine 15, arginine 39, and 66–69 (HPTQ). L-ornithine-binding positions include asparagine 99, aspartate 163, and 167-168 (SM). Carbamoyl phosphate-binding positions include 204-207 (HCLP) and threonine 232.

It belongs to the aspartate/ornithine carbamoyltransferase superfamily. OTCase family.

The protein localises to the cytoplasm. The enzyme catalyses carbamoyl phosphate + L-ornithine = L-citrulline + phosphate + H(+). The protein operates within amino-acid biosynthesis; L-arginine biosynthesis; L-arginine from L-ornithine and carbamoyl phosphate: step 1/3. Functionally, reversibly catalyzes the transfer of the carbamoyl group from carbamoyl phosphate (CP) to the N(epsilon) atom of ornithine (ORN) to produce L-citrulline. The chain is Ornithine carbamoyltransferase (argF) from Neisseria pharyngis.